Here is a 23-residue protein sequence, read N- to C-terminus: Caerin-4.2 (23 aa).

In terms of tissue distribution, expressed by the skin parotoid and/or rostral glands.

The protein localises to the secreted. Functionally, antibacterial peptide, that adopts an alpha helical conformation which can disrupt bacterial membranes. Each caerin displays a different antimicrobial specificity. This Ranoidea caerulea (Green tree frog) protein is Caerin-4.2.